The primary structure comprises 256 residues: Hydroxyacylglutathione hydrolase (256 aa).

Residues H57, H59, D61, H62, H115, D134, and H172 each contribute to the Zn(2+) site.

This sequence belongs to the metallo-beta-lactamase superfamily. Glyoxalase II family. As to quaternary structure, monomer. It depends on Zn(2+) as a cofactor.

The enzyme catalyses an S-(2-hydroxyacyl)glutathione + H2O = a 2-hydroxy carboxylate + glutathione + H(+). The protein operates within secondary metabolite metabolism; methylglyoxal degradation; (R)-lactate from methylglyoxal: step 2/2. Thiolesterase that catalyzes the hydrolysis of S-D-lactoyl-glutathione to form glutathione and D-lactic acid. This is Hydroxyacylglutathione hydrolase from Rhizobium etli (strain ATCC 51251 / DSM 11541 / JCM 21823 / NBRC 15573 / CFN 42).